A 90-amino-acid polypeptide reads, in one-letter code: UPF0237 protein PAE3582 (90 aa).

The ACT domain maps to 5–74 (VVSVLGADRV…LEEEGKRLGV (70 aa)).

This sequence belongs to the UPF0237 family.

This chain is UPF0237 protein PAE3582, found in Pyrobaculum aerophilum (strain ATCC 51768 / DSM 7523 / JCM 9630 / CIP 104966 / NBRC 100827 / IM2).